Here is a 161-residue protein sequence, read N- to C-terminus: Regulator of ribonuclease activity A (161 aa).

It belongs to the RraA family. Homotrimer. Binds to both RNA-binding sites in the C-terminal region of Rne and to RhlB.

It localises to the cytoplasm. In terms of biological role, globally modulates RNA abundance by binding to RNase E (Rne) and regulating its endonucleolytic activity. Can modulate Rne action in a substrate-dependent manner by altering the composition of the degradosome. Modulates RNA-binding and helicase activities of the degradosome. The chain is Regulator of ribonuclease activity A from Citrobacter koseri (strain ATCC BAA-895 / CDC 4225-83 / SGSC4696).